Consider the following 171-residue polypeptide: Cadmium-induced protein AS8 (171 aa).

The protein is Cadmium-induced protein AS8 of Arabidopsis thaliana (Mouse-ear cress).